The sequence spans 238 residues: Large ribosomal subunit protein uL1 (238 aa).

It belongs to the universal ribosomal protein uL1 family. Part of the 50S ribosomal subunit.

Functionally, binds directly to 23S rRNA. The L1 stalk is quite mobile in the ribosome, and is involved in E site tRNA release. Its function is as follows. Protein L1 is also a translational repressor protein, it controls the translation of the L11 operon by binding to its mRNA. The chain is Large ribosomal subunit protein uL1 from Gloeobacter violaceus (strain ATCC 29082 / PCC 7421).